A 224-amino-acid chain; its full sequence is Ornithine decarboxylase antizyme (224 aa).

The protein belongs to the ODC antizyme family. Interacts with ODC and thereby sterically blocks ODC homodimerization.

Functionally, ornithine decarboxylase (ODC) antizyme protein that negatively regulates ODC activity and intracellular polyamine biosynthesis in response to increased intracellular polyamine levels. Binds to ODC monomers, inhibiting the assembly of the functional ODC homodimer, and targets the monomers for ubiquitin-independent proteolytic destruction by the 26S proteasome. The chain is Ornithine decarboxylase antizyme (spa1) from Schizosaccharomyces octosporus (Fission yeast).